The chain runs to 45 residues: Large ribosomal subunit protein bL34 (45 aa).

This sequence belongs to the bacterial ribosomal protein bL34 family.

This Paenarthrobacter aurescens (strain TC1) protein is Large ribosomal subunit protein bL34.